We begin with the raw amino-acid sequence, 150 residues long: Troponin C, isoform 2A (150 aa).

Residue Met1 is modified to N-acetylmethionine. EF-hand domains follow at residues 7-42 (EQIGALQKAFDSFDTDSKGFITPETVGVILRMMGVK), 43-78 (ISEKNLQEVIAETDEDGSGELEFEEFVELAAKFLIE), 83-118 (ALKTELREAFRVYDKEGNGYITTDVLKEILRELDNR), and 119-150 (LTEEDLDSIIEEVDEDGSGTLDFNEFMEMMNG). Residues Asp56, Asp58, Ser60, Glu62, and Glu67 each coordinate Ca(2+). 5 residues coordinate Ca(2+): Asp132, Asp134, Ser136, Thr138, and Glu143.

Belongs to the troponin C family.

Functionally, troponin is the central regulatory protein of striated muscle contraction. Tn consists of three components: Tn-I which is the inhibitor of actomyosin ATPase, Tn-T which contains the binding site for tropomyosin and Tn-C. The binding of calcium to Tn-C abolishes the inhibitory action of Tn on actin filaments. The sequence is that of Troponin C, isoform 2A from Homarus americanus (American lobster).